Consider the following 71-residue polypeptide: UPF0346 protein SPT_1257 (71 aa).

Belongs to the UPF0346 family.

This chain is UPF0346 protein SPT_1257, found in Streptococcus pneumoniae (strain Taiwan19F-14).